Here is a 468-residue protein sequence, read N- to C-terminus: Arginine biosynthesis bifunctional protein ArgJ, mitochondrial (468 aa).

A mitochondrion-targeting transit peptide spans 1–23 (MVGFSRCALSQLRQPKAQLVRSF). Substrate is bound by residues threonine 198, lysine 227, threonine 238, glutamate 324, asparagine 463, and threonine 468. Threonine 238 acts as the Nucleophile in catalysis.

The protein belongs to the ArgJ family. Heterodimer of an alpha and a beta chain. In terms of processing, the alpha and beta chains are autoproteolytically processed from a single precursor protein within the mitochondrion.

The protein resides in the mitochondrion matrix. The enzyme catalyses N(2)-acetyl-L-ornithine + L-glutamate = N-acetyl-L-glutamate + L-ornithine. It carries out the reaction L-glutamate + acetyl-CoA = N-acetyl-L-glutamate + CoA + H(+). Its pathway is amino-acid biosynthesis; L-arginine biosynthesis; L-ornithine and N-acetyl-L-glutamate from L-glutamate and N(2)-acetyl-L-ornithine (cyclic): step 1/1. It functions in the pathway amino-acid biosynthesis; L-arginine biosynthesis; N(2)-acetyl-L-ornithine from L-glutamate: step 1/4. Its function is as follows. Catalyzes two activities which are involved in the cyclic version of arginine biosynthesis: the synthesis of acetylglutamate from glutamate and acetyl-CoA, and of ornithine by transacetylation between acetylornithine and glutamate. This Podospora anserina (strain S / ATCC MYA-4624 / DSM 980 / FGSC 10383) (Pleurage anserina) protein is Arginine biosynthesis bifunctional protein ArgJ, mitochondrial.